Consider the following 202-residue polypeptide: Probable 1-Cys peroxiredoxin (202 aa).

A Thioredoxin domain is found at 1-148; it reads STHGKIRIHD…VVRAVDSLLT (148 aa). The active-site Cysteine sulfenic acid (-SOH) intermediate is the Cys30. Residues 178-201 carry the Bipartite nuclear localization signal motif; sequence KKLFPQGFETKDLPSKKGYLRFTK.

It belongs to the peroxiredoxin family. Prx6 subfamily. In terms of tissue distribution, embryos.

Its subcellular location is the nucleus. The protein resides in the cytoplasm. It catalyses the reaction a hydroperoxide + [thioredoxin]-dithiol = an alcohol + [thioredoxin]-disulfide + H2O. Its function is as follows. Thiol-specific peroxidase that catalyzes the reduction of hydrogen peroxide and organic hydroperoxides to water and alcohols, respectively. Seems to contribute to the inhibition of germination during stress. The sequence is that of Probable 1-Cys peroxiredoxin from Bromus secalinus (Rye brome).